Here is a 156-residue protein sequence, read N- to C-terminus: MSRRGVIQRRPVPSDSVYNSRLVSMIIRRIMRHGKKSLAARIVYEALKTIEERTGNGALETFERAVRNATPLVEVKARRVGGATYQVPMEVRSERGTTLALRWLVQYSRSRPGRTMASKLANELMDAANETGNAIRKREETHRMAEANKAFAHYRY.

It belongs to the universal ribosomal protein uS7 family. In terms of assembly, part of the 30S ribosomal subunit. Contacts proteins S9 and S11.

Functionally, one of the primary rRNA binding proteins, it binds directly to 16S rRNA where it nucleates assembly of the head domain of the 30S subunit. Is located at the subunit interface close to the decoding center, probably blocks exit of the E-site tRNA. The chain is Small ribosomal subunit protein uS7 from Nostoc punctiforme (strain ATCC 29133 / PCC 73102).